Here is a 242-residue protein sequence, read N- to C-terminus: Probable 2-phosphosulfolactate phosphatase (242 aa).

It belongs to the ComB family. Mg(2+) is required as a cofactor.

The enzyme catalyses (2R)-O-phospho-3-sulfolactate + H2O = (2R)-3-sulfolactate + phosphate. This chain is Probable 2-phosphosulfolactate phosphatase, found in Prochlorococcus marinus (strain NATL1A).